A 179-amino-acid chain; its full sequence is Shikimate kinase (179 aa).

22–27 (GTGKSS) lines the ATP pocket. Mg(2+) is bound at residue Ser26. Substrate-binding residues include Asp44, Arg68, and Gly90. Arg128 serves as a coordination point for ATP. Residue Arg147 coordinates substrate.

Belongs to the shikimate kinase family. As to quaternary structure, monomer. Mg(2+) is required as a cofactor.

It is found in the cytoplasm. It catalyses the reaction shikimate + ATP = 3-phosphoshikimate + ADP + H(+). It participates in metabolic intermediate biosynthesis; chorismate biosynthesis; chorismate from D-erythrose 4-phosphate and phosphoenolpyruvate: step 5/7. Its function is as follows. Catalyzes the specific phosphorylation of the 3-hydroxyl group of shikimic acid using ATP as a cosubstrate. The protein is Shikimate kinase of Geobacter metallireducens (strain ATCC 53774 / DSM 7210 / GS-15).